Here is a 99-residue protein sequence, read N- to C-terminus: Large ribosomal subunit protein bL21 (99 aa).

Belongs to the bacterial ribosomal protein bL21 family. As to quaternary structure, part of the 50S ribosomal subunit. Contacts protein L20.

In terms of biological role, this protein binds to 23S rRNA in the presence of protein L20. This Mycoplasmopsis agalactiae (strain NCTC 10123 / CIP 59.7 / PG2) (Mycoplasma agalactiae) protein is Large ribosomal subunit protein bL21.